The following is a 240-amino-acid chain: Eukaryotic translation initiation factor 3 subunit J (240 aa).

The disordered stretch occupies residues 19-95 (KADVNKWAGE…FANMTPEQQL (77 aa)). Acidic residues predominate over residues 28-45 (EDEDDVKDNWEDDDEEEE). Over residues 46-56 (KKDAPKQEDTP) the composition is skewed to basic and acidic residues. Residues 60–71 (AKPKKAAQQKKL) show a composition bias toward basic residues. 2 coiled-coil regions span residues 63–90 (KKAA…ANMT) and 176–235 (SNNI…DYDD). Residues 72-81 (KKEDLERLQR) are compositionally biased toward basic and acidic residues.

It belongs to the eIF-3 subunit J family. Component of the eukaryotic translation initiation factor 3 (eIF-3) complex.

The protein resides in the cytoplasm. Its function is as follows. Component of the eukaryotic translation initiation factor 3 (eIF-3) complex, which is involved in protein synthesis of a specialized repertoire of mRNAs and, together with other initiation factors, stimulates binding of mRNA and methionyl-tRNAi to the 40S ribosome. The eIF-3 complex specifically targets and initiates translation of a subset of mRNAs involved in cell proliferation. The polypeptide is Eukaryotic translation initiation factor 3 subunit J (Anopheles gambiae (African malaria mosquito)).